Reading from the N-terminus, the 861-residue chain is Rod cGMP-specific 3',5'-cyclic phosphodiesterase subunit alpha (861 aa).

Gly-2 is modified (N-acetylglycine). GAF domains are found at residues 73–222 (QAER…NLIM) and 254–431 (DIER…GWSV). In terms of domain architecture, PDEase spans 483–816 (EEEELAEILQ…KEWKALADEY (334 aa)). His-559 functions as the Proton donor in the catalytic mechanism. Positions 563, 599, 600, and 720 each coordinate a divalent metal cation. Positions 821–861 (KALEEEKQKQQTAKQGAAGDQPGGNPSPAGGAPASKSCCIQ) are disordered. The span at 830 to 861 (QQTAKQGAAGDQPGGNPSPAGGAPASKSCCIQ) shows a compositional bias: low complexity. Cys-858 carries the post-translational modification Cysteine methyl ester. Cys-858 carries S-farnesyl cysteine lipidation. The propeptide at 859–861 (CIQ) is removed in mature form.

Belongs to the cyclic nucleotide phosphodiesterase family. In terms of assembly, oligomer composed of two catalytic chains (alpha and beta), an inhibitory chain (gamma) and the delta chain. The cofactor is a divalent metal cation.

It localises to the cell membrane. Its subcellular location is the cell projection. The protein resides in the cilium. It is found in the photoreceptor outer segment. It catalyses the reaction 3',5'-cyclic GMP + H2O = GMP + H(+). Functionally, rod-specific cGMP phosphodiesterase that catalyzes the hydrolysis of 3',5'-cyclic GMP. This protein participates in processes of transmission and amplification of the visual signal. The chain is Rod cGMP-specific 3',5'-cyclic phosphodiesterase subunit alpha from Canis lupus familiaris (Dog).